The following is a 304-amino-acid chain: Nod factor export ATP-binding protein I (304 aa).

The ABC transporter domain maps to 6–236 (IDFQQVEKRY…EIGCDVIEIY (231 aa)). Residue 38–45 (GPNGAGKT) coordinates ATP.

It belongs to the ABC transporter superfamily. Lipooligosaccharide exporter (TC 3.A.1.102) family. In terms of assembly, the complex is composed of two ATP-binding proteins (NodI) and two transmembrane proteins (NodJ).

It localises to the cell inner membrane. Part of the ABC transporter complex NodIJ involved in the export of the nodulation factors (Nod factors), the bacterial signal molecules that induce symbiosis and subsequent nodulation induction. Nod factors are LCO (lipo-chitin oligosaccharide), a modified beta-1,4-linked N-acetylglucosamine oligosaccharide. This subunit is responsible for energy coupling to the transport system. The chain is Nod factor export ATP-binding protein I from Burkholderia pseudomallei (strain K96243).